The primary structure comprises 477 residues: C4-dicarboxylate transport protein 1 (477 aa).

8 consecutive transmembrane segments (helical) span residues 21 to 39 (PYVQVLVAILLGVAVGHFY), 59 to 76 (MIIAPVIFLTVSTGIAGM), 89 to 111 (AMVYFVTFSTLALIVGLIVGNVI), 162 to 179 (ILQVLFFSVLFGIALAMV), 200 to 221 (LVGILMKAAPIGAFGAMAFTIG), 231 to 253 (LAMLVGTFYLTAFLFVFGVLGAV), 342 to 364 (VLLLLVAMLSSKGAAGVTGAGFV), and 368 to 387 (ATLSVVPAVPVAGMALILGV). Positions 435–477 (SAGQPLITPAPSNSAASLPVESPGWSQTPDDRAAGSKQTLAGR) are disordered.

This sequence belongs to the dicarboxylate/amino acid:cation symporter (DAACS) (TC 2.A.23) family.

It is found in the cell inner membrane. Functionally, responsible for the transport of dicarboxylates such as succinate, fumarate, and malate from the periplasm across the membrane. This transport system plays an important role in the energy supply of rhizobium-legume symbionts. This Mesorhizobium japonicum (strain LMG 29417 / CECT 9101 / MAFF 303099) (Mesorhizobium loti (strain MAFF 303099)) protein is C4-dicarboxylate transport protein 1 (dctA1).